The following is a 409-amino-acid chain: Elongation factor Tu (409 aa).

Residues 10-214 (KPHANIGTIG…EVDAYIPTPE (205 aa)) form the tr-type G domain. The tract at residues 19 to 26 (GHVDHGKT) is G1. 19-26 (GHVDHGKT) is a GTP binding site. Thr-26 is a binding site for Mg(2+). A G2 region spans residues 60-64 (GITIN). The G3 stretch occupies residues 81-84 (DCPG). Residues 81 to 85 (DCPGH) and 136 to 139 (NKED) each bind GTP. The interval 136-139 (NKED) is G4. The G5 stretch occupies residues 174–176 (SAL).

The protein belongs to the TRAFAC class translation factor GTPase superfamily. Classic translation factor GTPase family. EF-Tu/EF-1A subfamily. Monomer.

It is found in the cytoplasm. The catalysed reaction is GTP + H2O = GDP + phosphate + H(+). GTP hydrolase that promotes the GTP-dependent binding of aminoacyl-tRNA to the A-site of ribosomes during protein biosynthesis. In Synechococcus elongatus (strain ATCC 33912 / PCC 7942 / FACHB-805) (Anacystis nidulans R2), this protein is Elongation factor Tu.